The primary structure comprises 91 residues: Small ribosomal subunit protein bS18 (91 aa).

Residues 1-27 are disordered; it reads MTQQSNTERKPRAKGPKRPRKPKVDPF. Over residues 11–21 the composition is skewed to basic residues; it reads PRAKGPKRPRK.

This sequence belongs to the bacterial ribosomal protein bS18 family. Part of the 30S ribosomal subunit. Forms a tight heterodimer with protein bS6.

Binds as a heterodimer with protein bS6 to the central domain of the 16S rRNA, where it helps stabilize the platform of the 30S subunit. The polypeptide is Small ribosomal subunit protein bS18 (Deinococcus geothermalis (strain DSM 11300 / CIP 105573 / AG-3a)).